A 206-amino-acid chain; its full sequence is Protein GET1 (206 aa).

The Lumenal portion of the chain corresponds to 1–4; it reads MPSL. The helical transmembrane segment at 5-24 threads the bilayer; sequence LITILLLNIVIYVINTIGAA. Over 25–110 the chain is Cytoplasmic; the sequence is TIDSLLWLFY…SFDMTVKSVR (86 aa). Residues 42 to 99 are a coiled coil; the sequence is SHMAREQRRLKREVIQLKREMNATSSQDEFAKWAKLRRRHDKALETYEAKNNELTQCK. Residues 111–131 traverse the membrane as a helical segment; the sequence is WAATSGLMLFLQFWYSKRPIF. Over 132–155 the chain is Lumenal; that stretch reads TLPPGWIPWQVQWVLSFPRAPMGT. A helical membrane pass occupies residues 156–172; it reads VSIQIWGGACATVVALV. The Cytoplasmic portion of the chain corresponds to 173 to 206; it reads GDAVGATMGFVSASKKEGMKVGAGVGEKEGKKSQ.

This sequence belongs to the WRB/GET1 family. In terms of assembly, interacts with GET3.

It is found in the endoplasmic reticulum membrane. Required for the post-translational delivery of tail-anchored (TA) proteins to the endoplasmic reticulum. Acts as a membrane receptor for soluble GET3, which recognizes and selectively binds the transmembrane domain of TA proteins in the cytosol. In Ajellomyces dermatitidis (strain ER-3 / ATCC MYA-2586) (Blastomyces dermatitidis), this protein is Protein GET1.